We begin with the raw amino-acid sequence, 384 residues long: Putative F-box/kelch-repeat protein At3g27910 (384 aa).

The F-box domain maps to 27–79 (SPTSLPLPDEIIVNCFAYIPRCDYPSLSLVSKTFNRLITSIELNIVRSLFQRT). Kelch repeat units lie at residues 138–184 (KIYV…IVDG), 185–235 (KIYV…VMNK), 237–274 (IYIM…VIDN), and 275–323 (MLYT…MANH).

This is Putative F-box/kelch-repeat protein At3g27910 from Arabidopsis thaliana (Mouse-ear cress).